The chain runs to 106 residues: uncharacterized protein (106 aa).

The protein belongs to the SUI1 family.

This is an uncharacterized protein from Haemophilus influenzae (strain ATCC 51907 / DSM 11121 / KW20 / Rd).